The chain runs to 514 residues: tRNA-2-methylthio-N(6)-dimethylallyladenosine synthase (514 aa).

The segment at 1–21 is disordered; it reads MNEEQRKASSVDVLAERDKKA. Positions 68–186 constitute an MTTase N-terminal domain; that stretch reads RTFLIKTYGC…LPEILEEAYL (119 aa). Residues cysteine 77, cysteine 113, cysteine 147, cysteine 223, cysteine 227, and cysteine 230 each contribute to the [4Fe-4S] cluster site. Positions 209–440 constitute a Radical SAM core domain; that stretch reads REGNIKAWVN…KKVGHYSQIA (232 aa). The region spanning 442 to 505 is the TRAM domain; that stretch reads SKYEGQTVTV…QYSLNGSFVK (64 aa).

This sequence belongs to the methylthiotransferase family. MiaB subfamily. Monomer. [4Fe-4S] cluster serves as cofactor.

The protein localises to the cytoplasm. It catalyses the reaction N(6)-dimethylallyladenosine(37) in tRNA + (sulfur carrier)-SH + AH2 + 2 S-adenosyl-L-methionine = 2-methylsulfanyl-N(6)-dimethylallyladenosine(37) in tRNA + (sulfur carrier)-H + 5'-deoxyadenosine + L-methionine + A + S-adenosyl-L-homocysteine + 2 H(+). Catalyzes the methylthiolation of N6-(dimethylallyl)adenosine (i(6)A), leading to the formation of 2-methylthio-N6-(dimethylallyl)adenosine (ms(2)i(6)A) at position 37 in tRNAs that read codons beginning with uridine. This is tRNA-2-methylthio-N(6)-dimethylallyladenosine synthase from Staphylococcus aureus (strain MRSA252).